Here is a 944-residue protein sequence, read N- to C-terminus: 2-oxoglutarate dehydrogenase E1 component (944 aa).

Residues 914–944 (RRRRSSPAEGDPTVHKKEQERIVSDSLTRKN) are disordered. Basic and acidic residues predominate over residues 925-936 (PTVHKKEQERIV).

It belongs to the alpha-ketoglutarate dehydrogenase family. As to quaternary structure, homodimer. Part of the 2-oxoglutarate dehydrogenase (OGDH) complex composed of E1 (2-oxoglutarate dehydrogenase), E2 (dihydrolipoamide succinyltransferase) and E3 (dihydrolipoamide dehydrogenase); the complex contains multiple copies of the three enzymatic components (E1, E2 and E3). Thiamine diphosphate is required as a cofactor.

It catalyses the reaction N(6)-[(R)-lipoyl]-L-lysyl-[protein] + 2-oxoglutarate + H(+) = N(6)-[(R)-S(8)-succinyldihydrolipoyl]-L-lysyl-[protein] + CO2. E1 component of the 2-oxoglutarate dehydrogenase (OGDH) complex which catalyzes the decarboxylation of 2-oxoglutarate, the first step in the conversion of 2-oxoglutarate to succinyl-CoA and CO(2). The sequence is that of 2-oxoglutarate dehydrogenase E1 component from Bacillus licheniformis (strain ATCC 14580 / DSM 13 / JCM 2505 / CCUG 7422 / NBRC 12200 / NCIMB 9375 / NCTC 10341 / NRRL NRS-1264 / Gibson 46).